The sequence spans 199 residues: ATP-dependent Clp protease proteolytic subunit (199 aa).

Ser97 (nucleophile) is an active-site residue. The active site involves His122.

It belongs to the peptidase S14 family. Fourteen ClpP subunits assemble into 2 heptameric rings which stack back to back to give a disk-like structure with a central cavity, resembling the structure of eukaryotic proteasomes.

It is found in the cytoplasm. The enzyme catalyses Hydrolysis of proteins to small peptides in the presence of ATP and magnesium. alpha-casein is the usual test substrate. In the absence of ATP, only oligopeptides shorter than five residues are hydrolyzed (such as succinyl-Leu-Tyr-|-NHMec, and Leu-Tyr-Leu-|-Tyr-Trp, in which cleavage of the -Tyr-|-Leu- and -Tyr-|-Trp bonds also occurs).. Its function is as follows. Cleaves peptides in various proteins in a process that requires ATP hydrolysis. Has a chymotrypsin-like activity. Plays a major role in the degradation of misfolded proteins. The sequence is that of ATP-dependent Clp protease proteolytic subunit from Geobacter sulfurreducens (strain ATCC 51573 / DSM 12127 / PCA).